Consider the following 793-residue polypeptide: Probable phosphoketolase (793 aa).

The protein belongs to the XFP family. Thiamine diphosphate serves as cofactor.

This is Probable phosphoketolase from Streptomyces avermitilis (strain ATCC 31267 / DSM 46492 / JCM 5070 / NBRC 14893 / NCIMB 12804 / NRRL 8165 / MA-4680).